The primary structure comprises 1157 residues: ATP-dependent helicase/deoxyribonuclease subunit B (1157 aa).

Positions 1–275 constitute a UvrD-like helicase ATP-binding domain; the sequence is MTLHAYLGRA…QYFNQLYRFN (275 aa). 8-15 is an ATP binding site; that stretch reads GRAGTGKS. Residues 269–583 enclose the UvrD-like helicase C-terminal domain; it reads NQLYRFNNQD…SIGTMDLAKV (315 aa). Residues Cys-784, Cys-1112, Cys-1115, and Cys-1121 each coordinate [4Fe-4S] cluster.

The protein belongs to the helicase family. AddB/RexB type 1 subfamily. As to quaternary structure, heterodimer of AddA and AddB. Mg(2+) serves as cofactor. It depends on [4Fe-4S] cluster as a cofactor.

Its function is as follows. The heterodimer acts as both an ATP-dependent DNA helicase and an ATP-dependent, dual-direction single-stranded exonuclease. Recognizes the chi site generating a DNA molecule suitable for the initiation of homologous recombination. The AddB subunit has 5' -&gt; 3' nuclease activity but not helicase activity. In Staphylococcus aureus (strain JH9), this protein is ATP-dependent helicase/deoxyribonuclease subunit B.